Consider the following 202-residue polypeptide: Small ribosomal subunit protein uS5 (202 aa).

A compositionally biased stretch (gly residues) spans 1–13 (MPGQQRRGGGSGG). Residues 1 to 31 (MPGQQRRGGGSGGSDRRERRDRSGSGPAQEK) are disordered. Residues 14-23 (SDRRERRDRS) show a composition bias toward basic and acidic residues. An S5 DRBM domain is found at 34 to 97 (YVERVVAINR…EEAKKHFFKV (64 aa)).

It belongs to the universal ribosomal protein uS5 family. In terms of assembly, part of the 30S ribosomal subunit. Contacts proteins S4 and S8.

Functionally, with S4 and S12 plays an important role in translational accuracy. Its function is as follows. Located at the back of the 30S subunit body where it stabilizes the conformation of the head with respect to the body. This is Small ribosomal subunit protein uS5 from Frankia casuarinae (strain DSM 45818 / CECT 9043 / HFP020203 / CcI3).